A 249-amino-acid polypeptide reads, in one-letter code: Triosephosphate isomerase (249 aa).

Residue 9–11 participates in substrate binding; that stretch reads NWK. H94 (electrophile) is an active-site residue. The active-site Proton acceptor is the E166. Substrate-binding positions include G172, S212, and 233–234; that span reads GG.

The protein belongs to the triosephosphate isomerase family. In terms of assembly, homodimer.

It is found in the cytoplasm. The catalysed reaction is D-glyceraldehyde 3-phosphate = dihydroxyacetone phosphate. Its pathway is carbohydrate biosynthesis; gluconeogenesis. The protein operates within carbohydrate degradation; glycolysis; D-glyceraldehyde 3-phosphate from glycerone phosphate: step 1/1. In terms of biological role, involved in the gluconeogenesis. Catalyzes stereospecifically the conversion of dihydroxyacetone phosphate (DHAP) to D-glyceraldehyde-3-phosphate (G3P). The chain is Triosephosphate isomerase from Treponema pallidum (strain Nichols).